The primary structure comprises 171 residues: 3-hydroxydecanoyl-[acyl-carrier-protein] dehydratase (171 aa).

H70 is an active-site residue.

The protein belongs to the thioester dehydratase family. FabA subfamily. Homodimer.

It is found in the cytoplasm. The catalysed reaction is a (3R)-hydroxyacyl-[ACP] = a (2E)-enoyl-[ACP] + H2O. The enzyme catalyses (3R)-hydroxydecanoyl-[ACP] = (2E)-decenoyl-[ACP] + H2O. It catalyses the reaction (2E)-decenoyl-[ACP] = (3Z)-decenoyl-[ACP]. The protein operates within lipid metabolism; fatty acid biosynthesis. Necessary for the introduction of cis unsaturation into fatty acids. Catalyzes the dehydration of (3R)-3-hydroxydecanoyl-ACP to E-(2)-decenoyl-ACP and then its isomerization to Z-(3)-decenoyl-ACP. Can catalyze the dehydratase reaction for beta-hydroxyacyl-ACPs with saturated chain lengths up to 16:0, being most active on intermediate chain length. The protein is 3-hydroxydecanoyl-[acyl-carrier-protein] dehydratase of Shewanella putrefaciens (strain CN-32 / ATCC BAA-453).